The primary structure comprises 54 residues: Secreted virulence factor MC69 (54 aa).

The first 18 residues, 1 to 18 (MKFTLALLTTLCASLASA), serve as a signal peptide directing secretion. An intrachain disulfide couples Cys-38 to Cys-48.

Belongs to the MC69 virulence factor family.

It localises to the secreted. In terms of biological role, secreted protein required for appressorial penetration of intact host epidermal cells and for pathogenicity. The protein is Secreted virulence factor MC69 of Colletotrichum orbiculare (strain 104-T / ATCC 96160 / CBS 514.97 / LARS 414 / MAFF 240422) (Cucumber anthracnose fungus).